Consider the following 454-residue polypeptide: Argininosuccinate lyase (454 aa).

This sequence belongs to the lyase 1 family. Argininosuccinate lyase subfamily.

It is found in the cytoplasm. It carries out the reaction 2-(N(omega)-L-arginino)succinate = fumarate + L-arginine. Its pathway is amino-acid biosynthesis; L-arginine biosynthesis; L-arginine from L-ornithine and carbamoyl phosphate: step 3/3. This is Argininosuccinate lyase from Herpetosiphon aurantiacus (strain ATCC 23779 / DSM 785 / 114-95).